A 774-amino-acid polypeptide reads, in one-letter code: Lysyl oxidase homolog 2 (774 aa).

An N-terminal signal peptide occupies residues 1–24 (MEGFLGFNHNHCFIVLFFVSLSLA). 4 consecutive SRCR domains span residues 57–158 (LRLA…VVCS), 187–301 (IRPI…ASCV), 325–424 (VRLK…VRCN), and 434–543 (LRLV…VSCS). Cystine bridges form between Cys83/Cys147, Cys96/Cys157, Cys127/Cys137, Cys217/Cys290, Cys230/Cys300, Cys264/Cys274, Cys350/Cys413, Cys363/Cys423, and Cys394/Cys404. N-linked (GlcNAc...) asparagine glycosylation is present at Asn287. Asn454 is a glycosylation site (N-linked (GlcNAc...) asparagine). Intrachain disulfides connect Cys463/Cys529, Cys476/Cys542, and Cys510/Cys520. The interval 547–751 (PDLVLNAELV…MYNSVHNGAN (205 aa)) is lysyl-oxidase like. 2 residues coordinate Ca(2+): Asp548 and Leu549. 4 cysteine pairs are disulfide-bonded: Cys572-Cys624, Cys578-Cys694, Cys656-Cys672, and Cys662-Cys684. His625, His627, and His629 together coordinate Cu cation. N-linked (GlcNAc...) asparagine glycosylation is present at Asn643. The lysine tyrosylquinone (Lys-Tyr) cross-link spans 652 to 688 (KASFCLEDTECEADVQKQYECANFGEQGITVGCWDVY). 2',4',5'-topaquinone is present on Tyr688. 4 residues coordinate Ca(2+): Glu721, Asp723, Asn726, and Asn727.

The protein belongs to the lysyl oxidase family. It depends on Cu cation as a cofactor. Lysine tyrosylquinone residue serves as cofactor. The lysine tyrosylquinone cross-link (LTQ) is generated by condensation of the epsilon-amino group of a lysine with a topaquinone produced by oxidation of tyrosine.

The protein localises to the secreted. It is found in the extracellular space. The protein resides in the extracellular matrix. It localises to the basement membrane. Its subcellular location is the nucleus. The protein localises to the chromosome. It is found in the endoplasmic reticulum. The catalysed reaction is L-lysyl-[protein] + O2 + H2O = (S)-2-amino-6-oxohexanoyl-[protein] + H2O2 + NH4(+). Its function is as follows. Mediates the post-translational oxidative deamination of lysine residues on target proteins leading to the formation of deaminated lysine (allysine). Acts as a transcription corepressor and specifically mediates deamination of trimethylated 'Lys-4' of histone H3 (H3K4me3), a specific tag for epigenetic transcriptional activation. Shows no activity against histone H3 when it is trimethylated on 'Lys-9' (H3K9me3) or 'Lys-27' (H3K27me3) or when 'Lys-4' is monomethylated (H3K4me1) or dimethylated (H3K4me2). Also mediates deamination of methylated TAF10, a member of the transcription factor IID (TFIID) complex, which induces release of TAF10 from promoters, leading to inhibition of TFIID-dependent transcription. LOXL2-mediated deamination of TAF10 results in transcriptional repression of genes required for embryonic stem cell pluripotency including POU5F1/OCT4, NANOG, KLF4 and SOX2. Involved in epithelial to mesenchymal transition (EMT) via interaction with SNAI1 and participates in repression of E-cadherin CDH1, probably by mediating deamination of histone H3. During EMT, involved with SNAI1 in negatively regulating pericentromeric heterochromatin transcription. SNAI1 recruits LOXL2 to pericentromeric regions to oxidize histone H3 and repress transcription which leads to release of heterochromatin component CBX5/HP1A, enabling chromatin reorganization and acquisition of mesenchymal traits. Interacts with the endoplasmic reticulum protein HSPA5 which activates the IRE1-XBP1 pathway of the unfolded protein response, leading to expression of several transcription factors involved in EMT and subsequent EMT induction. When secreted into the extracellular matrix, promotes cross-linking of extracellular matrix proteins by mediating oxidative deamination of peptidyl lysine residues in precursors to fibrous collagen and elastin. Acts as a regulator of sprouting angiogenesis, probably via collagen IV scaffolding. Acts as a regulator of chondrocyte differentiation, probably by regulating expression of factors that control chondrocyte differentiation. This Gallus gallus (Chicken) protein is Lysyl oxidase homolog 2 (LOXL2).